A 459-amino-acid polypeptide reads, in one-letter code: Chromosomal replication initiator protein DnaA (459 aa).

Positions 1-90 (MAVSLWQQCI…RPASKPAAPA (90 aa)) are domain I, interacts with DnaA modulators. The disordered stretch occupies residues 75–124 (RFDIGSRPASKPAAPAASTKSPVAPAAKSPSKPSFNSNEPAATANHRSNM). A compositionally biased stretch (low complexity) spans 80 to 108 (SRPASKPAAPAASTKSPVAPAAKSPSKPS). A domain II region spans residues 91–122 (ASTKSPVAPAAKSPSKPSFNSNEPAATANHRS). A compositionally biased stretch (polar residues) spans 109–124 (FNSNEPAATANHRSNM). The domain III, AAA+ region stretch occupies residues 123–339 (NMNPTYQFDN…GALNRVIANA (217 aa)). Residues Gly-167, Gly-169, Lys-170, and Thr-171 each coordinate ATP. Residues 340–459 (NFTGRPITID…YANLIRTLSS (120 aa)) are domain IV, binds dsDNA.

This sequence belongs to the DnaA family. Oligomerizes as a right-handed, spiral filament on DNA at oriC.

It localises to the cytoplasm. Its function is as follows. Plays an essential role in the initiation and regulation of chromosomal replication. ATP-DnaA binds to the origin of replication (oriC) to initiate formation of the DNA replication initiation complex once per cell cycle. Binds the DnaA box (a 9 base pair repeat at the origin) and separates the double-stranded (ds)DNA. Forms a right-handed helical filament on oriC DNA; dsDNA binds to the exterior of the filament while single-stranded (ss)DNA is stabiized in the filament's interior. The ATP-DnaA-oriC complex binds and stabilizes one strand of the AT-rich DNA unwinding element (DUE), permitting loading of DNA polymerase. After initiation quickly degrades to an ADP-DnaA complex that is not apt for DNA replication. Binds acidic phospholipids. The protein is Chromosomal replication initiator protein DnaA of Shewanella loihica (strain ATCC BAA-1088 / PV-4).